The primary structure comprises 192 residues: Leucine-rich repeat-containing protein 51 (192 aa).

LRR repeat units lie at residues Ser49–Val71, Asn80–Phe101, and Asn103–Ala124. Residues Asn137–Trp175 form the LRRCT domain.

In terms of tissue distribution, widely expressed in adult and embryonic tissues. Expressed in the developing choroid plexus from 12.5 dpc and in the epithelium of the developing airway tract from 14.5 dpc. Also expressed in the postnatal inner ear.

It is found in the cytoplasm. This is Leucine-rich repeat-containing protein 51 from Mus musculus (Mouse).